A 367-amino-acid chain; its full sequence is Protein P39 (367 aa).

Coiled-coil stretches lie at residues 165 to 202 and 235 to 308; these read REGEEINILRKEALELQKQVTEQKAVVAELRLQISKQQ and EMIE…SDRL.

Its function is as follows. Might be involved in virion assembly and vector-mediated transmission of the virus. The chain is Protein P39 from Peanut clump virus (isolate 87/TGTA2) (PCV).